A 399-amino-acid chain; its full sequence is Argininosuccinate synthase (399 aa).

An ATP-binding site is contributed by 8–16 (AYSGGLDTS). Tyr-87 lines the L-citrulline pocket. Gly-117 contacts ATP. Thr-119, Asn-123, and Asp-124 together coordinate L-aspartate. Position 123 (Asn-123) interacts with L-citrulline. 4 residues coordinate L-citrulline: Arg-127, Ser-175, Glu-260, and Tyr-272.

It belongs to the argininosuccinate synthase family. Type 1 subfamily. In terms of assembly, homotetramer.

The protein resides in the cytoplasm. It carries out the reaction L-citrulline + L-aspartate + ATP = 2-(N(omega)-L-arginino)succinate + AMP + diphosphate + H(+). It participates in amino-acid biosynthesis; L-arginine biosynthesis; L-arginine from L-ornithine and carbamoyl phosphate: step 2/3. The sequence is that of Argininosuccinate synthase from Rhodococcus erythropolis (strain PR4 / NBRC 100887).